Consider the following 668-residue polypeptide: DNA ligase (668 aa).

NAD(+)-binding positions include 37–41, 86–87, and Glu116; these read DNVYD and SM. Lys118 acts as the N6-AMP-lysine intermediate in catalysis. 4 residues coordinate NAD(+): Arg139, Glu173, Lys288, and Lys312. Zn(2+) is bound by residues Cys406, Cys409, Cys424, and Cys429. One can recognise a BRCT domain in the interval 591–668; sequence APDNPFKDKT…TEEEAIAQIE (78 aa).

The protein belongs to the NAD-dependent DNA ligase family. LigA subfamily. Mg(2+) serves as cofactor. It depends on Mn(2+) as a cofactor.

It catalyses the reaction NAD(+) + (deoxyribonucleotide)n-3'-hydroxyl + 5'-phospho-(deoxyribonucleotide)m = (deoxyribonucleotide)n+m + AMP + beta-nicotinamide D-nucleotide.. Functionally, DNA ligase that catalyzes the formation of phosphodiester linkages between 5'-phosphoryl and 3'-hydroxyl groups in double-stranded DNA using NAD as a coenzyme and as the energy source for the reaction. It is essential for DNA replication and repair of damaged DNA. The sequence is that of DNA ligase from Lactobacillus helveticus (strain DPC 4571).